A 198-amino-acid chain; its full sequence is Recombination protein RecR (198 aa).

The segment at 57–72 (CSICGNLTESDPCAIC) adopts a C4-type zinc-finger fold. Positions 80 to 175 (TTILVVEESK…KVTRLAHGLA (96 aa)) constitute a Toprim domain.

It belongs to the RecR family.

May play a role in DNA repair. It seems to be involved in an RecBC-independent recombinational process of DNA repair. It may act with RecF and RecO. The chain is Recombination protein RecR from Lactococcus lactis subsp. cremoris (strain SK11).